The primary structure comprises 426 residues: Citrate transporter (426 aa).

The next 12 membrane-spanning stretches (helical) occupy residues 1 to 21 (MLAI…MSNR), 22 to 42 (LSAL…SGFG), 59 to 79 (TGIM…SGLF), 86 to 106 (ILSF…VLTM), 137 to 157 (LVLA…PWGG), 176 to 196 (PLIP…YILG), 232 to 252 (LLTV…PVLF), 278 to 298 (AGNA…TGIL), 318 to 338 (AMGP…TFFM), 343 to 363 (FYFG…IDAA), 377 to 397 (LLSP…VSFG), and 406 to 426 (WAVG…IISF).

The protein belongs to the CitM (TC 2.A.11) transporter family.

It localises to the cell membrane. In terms of biological role, transports the free citrate anion. Probably cotransports citrate and at least three or four protons. The citrate uptake is inhibited by the presence of magnesium ions. The polypeptide is Citrate transporter (citN) (Bacillus subtilis (strain 168)).